The chain runs to 294 residues: MQHLVDTSNFSDAQIVQLLHDAKTFKAQRPPQLLRDKLIITLFFEASTRTRSSFEVAAKRLGAAVVHLDPSRSSTKKGESLEDTFANLCAMDPDGVIIRHEENEAPGILADMQMTSVINAGAGNYAHPTQALLDLFTLMEHFEGNIEGKTIAIVGDIISSRVASSGIRLLRRMGMNVILVAPEPFMPQSDLPQYENLEDVLDKVDVIMSLRAQLERHASPIFDDYNEYARHYCITEERLGDRNILILHPGPVMRNIDISDEILEDPRCKVLTQVKNGVYMRMAILKLLLLDSNN.

2 residues coordinate carbamoyl phosphate: R49 and T50. L-aspartate is bound at residue K77. Carbamoyl phosphate-binding residues include R99, H127, and Q130. L-aspartate-binding residues include R161 and R211. The carbamoyl phosphate site is built by G250 and P251.

It belongs to the aspartate/ornithine carbamoyltransferase superfamily. ATCase family. In terms of assembly, heterododecamer (2C3:3R2) of six catalytic PyrB chains organized as two trimers (C3), and six regulatory PyrI chains organized as three dimers (R2).

It carries out the reaction carbamoyl phosphate + L-aspartate = N-carbamoyl-L-aspartate + phosphate + H(+). The protein operates within pyrimidine metabolism; UMP biosynthesis via de novo pathway; (S)-dihydroorotate from bicarbonate: step 2/3. In terms of biological role, catalyzes the condensation of carbamoyl phosphate and aspartate to form carbamoyl aspartate and inorganic phosphate, the committed step in the de novo pyrimidine nucleotide biosynthesis pathway. The chain is Aspartate carbamoyltransferase catalytic subunit from Sulfurovum sp. (strain NBC37-1).